The sequence spans 142 residues: UPF0275 protein PM0505 (142 aa).

Belongs to the UPF0275 family.

The sequence is that of UPF0275 protein PM0505 from Pasteurella multocida (strain Pm70).